The primary structure comprises 301 residues: GTPase Era (301 aa).

The Era-type G domain occupies 11 to 180; the sequence is RSGIITLVGR…KDVFFENCLN (170 aa). The segment at 19-26 is G1; that stretch reads GRPNVGKS. 19–26 is a binding site for GTP; it reads GRPNVGKS. The G2 stretch occupies residues 45–49; it reads QTTRR. The segment at 66-69 is G3; that stretch reads DTPG. Residues 66 to 70 and 129 to 132 each bind GTP; these read DTPGI and TKID. The G4 stretch occupies residues 129–132; the sequence is TKID. Residues 159 to 161 form a G5 region; the sequence is VSA. The region spanning 210 to 286 is the KH type-2 domain; it reads LEQEIPHSLL…YLRLIVKVVK (77 aa).

Belongs to the TRAFAC class TrmE-Era-EngA-EngB-Septin-like GTPase superfamily. Era GTPase family. As to quaternary structure, monomer.

Its subcellular location is the cytoplasm. The protein localises to the cell membrane. Functionally, an essential GTPase that binds both GDP and GTP, with rapid nucleotide exchange. Plays a role in 16S rRNA processing and 30S ribosomal subunit biogenesis and possibly also in cell cycle regulation and energy metabolism. The chain is GTPase Era from Tropheryma whipplei (strain TW08/27) (Whipple's bacillus).